The sequence spans 480 residues: Cytochrome b-c1 complex subunit 1, mitochondrial (480 aa).

A mitochondrion-targeting transit peptide spans 1 to 34; it reads MAASAVCRAACSGTQALLRTCRSPALLRLPALRG. N6-acetyllysine occurs at positions 111 and 138. At K163 the chain carries N6-acetyllysine; alternate. K163 bears the N6-succinyllysine; alternate mark. A Phosphoserine modification is found at S212. T214 carries the post-translational modification Phosphothreonine.

This sequence belongs to the peptidase M16 family. UQCRC1/QCR1 subfamily. Component of the ubiquinol-cytochrome c oxidoreductase (cytochrome b-c1 complex, complex III, CIII), a multisubunit enzyme composed of 11 subunits. The complex is composed of 3 respiratory subunits cytochrome b, cytochrome c1 and Rieske protein UQCRFS1, 2 core protein subunits UQCRC1/QCR1 and UQCRC2/QCR2, and 6 low-molecular weight protein subunits UQCRH/QCR6, UQCRB/QCR7, UQCRQ/QCR8, UQCR10/QCR9, UQCR11/QCR10 and subunit 9, the cleavage product of Rieske protein UQCRFS1. The complex exists as an obligatory dimer and forms supercomplexes (SCs) in the inner mitochondrial membrane with NADH-ubiquinone oxidoreductase (complex I, CI) and cytochrome c oxidase (complex IV, CIV), resulting in different assemblies (supercomplex SCI(1)III(2)IV(1) and megacomplex MCI(2)III(2)IV(2)). Interacts with UQCC6. Interacts with STMP1.

Its subcellular location is the mitochondrion inner membrane. In terms of biological role, component of the ubiquinol-cytochrome c oxidoreductase, a multisubunit transmembrane complex that is part of the mitochondrial electron transport chain which drives oxidative phosphorylation. The respiratory chain contains 3 multisubunit complexes succinate dehydrogenase (complex II, CII), ubiquinol-cytochrome c oxidoreductase (cytochrome b-c1 complex, complex III, CIII) and cytochrome c oxidase (complex IV, CIV), that cooperate to transfer electrons derived from NADH and succinate to molecular oxygen, creating an electrochemical gradient over the inner membrane that drives transmembrane transport and the ATP synthase. The cytochrome b-c1 complex catalyzes electron transfer from ubiquinol to cytochrome c, linking this redox reaction to translocation of protons across the mitochondrial inner membrane, with protons being carried across the membrane as hydrogens on the quinol. In the process called Q cycle, 2 protons are consumed from the matrix, 4 protons are released into the intermembrane space and 2 electrons are passed to cytochrome c. The 2 core subunits UQCRC1/QCR1 and UQCRC2/QCR2 are homologous to the 2 mitochondrial-processing peptidase (MPP) subunits beta-MPP and alpha-MPP respectively, and they seem to have preserved their MPP processing properties. May be involved in the in situ processing of UQCRFS1 into the mature Rieske protein and its mitochondrial targeting sequence (MTS)/subunit 9 when incorporated into complex III. Seems to play an important role in the maintenance of proper mitochondrial function in nigral dopaminergic neurons. The chain is Cytochrome b-c1 complex subunit 1, mitochondrial (Uqcrc1) from Rattus norvegicus (Rat).